A 514-amino-acid polypeptide reads, in one-letter code: Protein nucleotidyltransferase YdiU (514 aa).

ATP-binding residues include glycine 111, glycine 113, arginine 114, lysine 134, aspartate 146, glycine 147, arginine 197, and arginine 204. Catalysis depends on aspartate 276, which acts as the Proton acceptor. The Mg(2+) site is built by asparagine 277 and aspartate 286. Aspartate 286 is a binding site for ATP.

The protein belongs to the SELO family. Requires Mg(2+) as cofactor. It depends on Mn(2+) as a cofactor.

The catalysed reaction is L-seryl-[protein] + ATP = 3-O-(5'-adenylyl)-L-seryl-[protein] + diphosphate. The enzyme catalyses L-threonyl-[protein] + ATP = 3-O-(5'-adenylyl)-L-threonyl-[protein] + diphosphate. It catalyses the reaction L-tyrosyl-[protein] + ATP = O-(5'-adenylyl)-L-tyrosyl-[protein] + diphosphate. It carries out the reaction L-histidyl-[protein] + UTP = N(tele)-(5'-uridylyl)-L-histidyl-[protein] + diphosphate. The catalysed reaction is L-seryl-[protein] + UTP = O-(5'-uridylyl)-L-seryl-[protein] + diphosphate. The enzyme catalyses L-tyrosyl-[protein] + UTP = O-(5'-uridylyl)-L-tyrosyl-[protein] + diphosphate. Functionally, nucleotidyltransferase involved in the post-translational modification of proteins. It can catalyze the addition of adenosine monophosphate (AMP) or uridine monophosphate (UMP) to a protein, resulting in modifications known as AMPylation and UMPylation. This Rhodococcus jostii (strain RHA1) protein is Protein nucleotidyltransferase YdiU.